The chain runs to 276 residues: MLVNFSKMHGLGNDFVVIDNITQNVFLSRDQIIKLADRHFGIGFDQLLMVEAPYSPDLDFHYRIFNADGTEVEQCGNGARCFARFVRMKGLTNKHKITVSTKSGNLTLYIEKDGQVTVNMGHPNFEPSKIPLKATKRELTYIIRTEEHTVFSGAVSMGNPHCVLEVDDITTAQVDILGPLLENHERFPQRANIGFMQVISKEHIKLRVWERGVNETLACGTGACAAMVIGFIQNKLISTVQVDLPGGSLQIRWNGEGHPVRMTGPAEHVFDGQVAL.

Residues Asn-13, Gln-46, and Asn-66 each contribute to the substrate site. Cys-75 (proton donor) is an active-site residue. Substrate contacts are provided by residues 76-77, Asn-159, Asn-192, and 210-211; these read GN and ER. The active-site Proton acceptor is the Cys-219. Substrate is bound at residue 220–221; that stretch reads GT.

Belongs to the diaminopimelate epimerase family. Homodimer.

The protein resides in the cytoplasm. The catalysed reaction is (2S,6S)-2,6-diaminopimelate = meso-2,6-diaminopimelate. Its pathway is amino-acid biosynthesis; L-lysine biosynthesis via DAP pathway; DL-2,6-diaminopimelate from LL-2,6-diaminopimelate: step 1/1. Functionally, catalyzes the stereoinversion of LL-2,6-diaminopimelate (L,L-DAP) to meso-diaminopimelate (meso-DAP), a precursor of L-lysine and an essential component of the bacterial peptidoglycan. The chain is Diaminopimelate epimerase from Pseudoalteromonas translucida (strain TAC 125).